Here is an 81-residue protein sequence, read N- to C-terminus: Large ribosomal subunit protein bL31B (81 aa).

This sequence belongs to the bacterial ribosomal protein bL31 family. Type B subfamily. In terms of assembly, part of the 50S ribosomal subunit.

The chain is Large ribosomal subunit protein bL31B from Halalkalibacterium halodurans (strain ATCC BAA-125 / DSM 18197 / FERM 7344 / JCM 9153 / C-125) (Bacillus halodurans).